The primary structure comprises 862 residues: Switch 2 (862 aa).

Disordered stretches follow at residues 13 to 43 (PCGS…SSLS) and 58 to 95 (KHES…DDER). Positions 16–27 (SFPSSSSLRVSS) are enriched in low complexity. Residues 58 to 84 (KHESKISKTQVEDFDHNEDDHKRNIKF) are compositionally biased toward basic and acidic residues. The segment covering 85–95 (DEEEVDEDDER) has biased composition (acidic residues). The Helicase ATP-binding domain occupies 151–323 (YNLYKNNHGG…FNLFEWVAPG (173 aa)). 164–171 (DDMGLGKT) is an ATP binding site. Residues 274-277 (DEAH) carry the DEAH box motif. The stretch at 274–294 (DEAHRLKNEKSKLYEACLEIK) forms a coiled coil. Residues 532–685 (ALEKLMASWI…VAGKMETRYF (154 aa)) enclose the Helicase C-terminal domain. Positions 782-793 (TTSTSQRLNGDG) are enriched in polar residues. The segment at 782 to 821 (TTSTSQRLNGDGNSADRKKKKRKGCSEEEDMSSSNREQKR) is disordered.

Belongs to the SNF2/RAD54 helicase family.

Functionally, may be involved in early DNA damage response. Probable chromatin remodeling factor. The chain is Switch 2 from Arabidopsis thaliana (Mouse-ear cress).